The chain runs to 382 residues: Mannitol-1-phosphate 5-dehydrogenase (382 aa).

3–14 (ALHFGAGNIGRG) serves as a coordination point for NAD(+). An N6-acetyllysine modification is found at Lys269.

This sequence belongs to the mannitol dehydrogenase family.

It carries out the reaction D-mannitol 1-phosphate + NAD(+) = beta-D-fructose 6-phosphate + NADH + H(+). The protein is Mannitol-1-phosphate 5-dehydrogenase of Escherichia coli O7:K1 (strain IAI39 / ExPEC).